Here is a 341-residue protein sequence, read N- to C-terminus: Phenylalanine--tRNA ligase alpha subunit (341 aa).

Glutamate 256 is a binding site for Mg(2+).

The protein belongs to the class-II aminoacyl-tRNA synthetase family. Phe-tRNA synthetase alpha subunit type 1 subfamily. In terms of assembly, tetramer of two alpha and two beta subunits. Mg(2+) is required as a cofactor.

It localises to the cytoplasm. The enzyme catalyses tRNA(Phe) + L-phenylalanine + ATP = L-phenylalanyl-tRNA(Phe) + AMP + diphosphate + H(+). This Clostridium perfringens (strain 13 / Type A) protein is Phenylalanine--tRNA ligase alpha subunit.